A 96-amino-acid chain; its full sequence is Glutamyl-tRNA(Gln) amidotransferase subunit C (96 aa).

Belongs to the GatC family. As to quaternary structure, heterotrimer of A, B and C subunits.

The enzyme catalyses L-glutamyl-tRNA(Gln) + L-glutamine + ATP + H2O = L-glutaminyl-tRNA(Gln) + L-glutamate + ADP + phosphate + H(+). It carries out the reaction L-aspartyl-tRNA(Asn) + L-glutamine + ATP + H2O = L-asparaginyl-tRNA(Asn) + L-glutamate + ADP + phosphate + 2 H(+). Allows the formation of correctly charged Asn-tRNA(Asn) or Gln-tRNA(Gln) through the transamidation of misacylated Asp-tRNA(Asn) or Glu-tRNA(Gln) in organisms which lack either or both of asparaginyl-tRNA or glutaminyl-tRNA synthetases. The reaction takes place in the presence of glutamine and ATP through an activated phospho-Asp-tRNA(Asn) or phospho-Glu-tRNA(Gln). This chain is Glutamyl-tRNA(Gln) amidotransferase subunit C, found in Nostoc sp. (strain PCC 7120 / SAG 25.82 / UTEX 2576).